The following is a 66-amino-acid chain: Phylloseptin-S2 (66 aa).

The signal sequence occupies residues 1–22 (MAFLKKSLFLVLFLGLVSLSIC). A propeptide spanning residues 23 to 46 (EEEKRETEEEEHDQEEDDKSEEKR) is cleaved from the precursor. Residues 25–44 (EKRETEEEEHDQEEDDKSEE) are disordered. Residues 30–41 (EEEEHDQEEDDK) are compositionally biased toward acidic residues. A Phenylalanine amide modification is found at Phe-65.

Expressed by the skin glands.

The protein localises to the secreted. It is found in the target cell membrane. Functionally, antimicrobial peptide with high activity against Gram-positive bacteria, moderate activity against Gram-negative bacteria, and moderate activity against fungi. Acts by causing bacterial membrane disruption inducing leakage of the intracellular content followed by cell death. It adopts an alpha-helical amphipathic structure in membrane environments. Also shows highly potent antiparasitic activity against Leishmania species. Shows moderate hemolytic activity on human erythrocytes (LC(50)=25 uM). Is also active on human monocytes (IC(50)=22.5 uM). The sequence is that of Phylloseptin-S2 from Phyllomedusa sauvagei (Sauvage's leaf frog).